The following is a 421-amino-acid chain: NADP(+)-dependent glutamate dehydrogenase (421 aa).

The substrate site is built by K70 and K94. K106 (proton donor) is an active-site residue. Residues T190 and N221 each coordinate NADP(+). S354 is a substrate binding site.

It belongs to the Glu/Leu/Phe/Val dehydrogenases family. Homohexamer.

The enzyme catalyses L-glutamate + NADP(+) + H2O = 2-oxoglutarate + NH4(+) + NADPH + H(+). Its activity is regulated as follows. Is not regulated allosterically. Activity is inhibited in the presence of high ionic strength; the inhibitory effect of KCl is slightly higher than that of NaCl. Catalyzes the reversible oxidative deamination of L-glutamate to 2-oxoglutarate and ammonia, thereby playing a key role at the intersection of the carbon and nitrogen metabolic pathways. Shows a high preference for NADP(+)/NADPH as the acceptor/donor over NAD(+)/NADH. May function in vivo in the synthetic direction. Also catalyzes at very low rates the oxidative deamination of L-2-aminobutyrate, and the reductive amination of 2-oxovalerate and 2-oxobutyrate. The chain is NADP(+)-dependent glutamate dehydrogenase from Pyrobaculum calidifontis (strain DSM 21063 / JCM 11548 / VA1).